The following is a 130-amino-acid chain: Small ribosomal subunit protein uS8 (130 aa).

This sequence belongs to the universal ribosomal protein uS8 family. In terms of assembly, part of the 30S ribosomal subunit.

One of the primary rRNA binding proteins, it binds directly to 16S rRNA central domain where it helps coordinate assembly of the platform of the 30S subunit. This is Small ribosomal subunit protein uS8 from Pyrobaculum arsenaticum (strain DSM 13514 / JCM 11321 / PZ6).